The sequence spans 511 residues: Ribose import ATP-binding protein RbsA 3 (511 aa).

2 consecutive ABC transporter domains span residues 21 to 257 and 256 to 511; these read LEMR…VGRD and RDVE…TGNA. ATP is bound at residue 53-60; sequence GENGAGKS.

This sequence belongs to the ABC transporter superfamily. Ribose importer (TC 3.A.1.2.1) family. The complex is composed of an ATP-binding protein (RbsA), two transmembrane proteins (RbsC) and a solute-binding protein (RbsB).

It localises to the cell inner membrane. It catalyses the reaction D-ribose(out) + ATP + H2O = D-ribose(in) + ADP + phosphate + H(+). Functionally, part of the ABC transporter complex RbsABC involved in ribose import. Responsible for energy coupling to the transport system. In Rhizobium etli (strain ATCC 51251 / DSM 11541 / JCM 21823 / NBRC 15573 / CFN 42), this protein is Ribose import ATP-binding protein RbsA 3.